Here is a 193-residue protein sequence, read N- to C-terminus: Pilin-like protein PilA2 (193 aa).

A propeptide spans 1 to 4 (leader sequence); it reads MRKG. N-methylleucine is present on leucine 5. Residues 5–25 form a helical membrane-spanning segment; the sequence is LTLVEVLVTLVIMGIAFAALL.

It localises to the cell inner membrane. The protein resides in the cell outer membrane. The protein localises to the periplasm. Functionally, plays an essential role in natural DNA transformation but is not required for pilus biogenesis. This is Pilin-like protein PilA2 (pilA2) from Thermus thermophilus (strain ATCC BAA-163 / DSM 7039 / HB27).